Consider the following 371-residue polypeptide: Transaldolase (371 aa).

Catalysis depends on K140, which acts as the Schiff-base intermediate with substrate.

The protein belongs to the transaldolase family. Type 2 subfamily.

It is found in the cytoplasm. It carries out the reaction D-sedoheptulose 7-phosphate + D-glyceraldehyde 3-phosphate = D-erythrose 4-phosphate + beta-D-fructose 6-phosphate. Its pathway is carbohydrate degradation; pentose phosphate pathway; D-glyceraldehyde 3-phosphate and beta-D-fructose 6-phosphate from D-ribose 5-phosphate and D-xylulose 5-phosphate (non-oxidative stage): step 2/3. Functionally, transaldolase is important for the balance of metabolites in the pentose-phosphate pathway. This is Transaldolase from Arthrobacter sp. (strain FB24).